Here is a 399-residue protein sequence, read N- to C-terminus: Enoyl-[acyl-carrier-protein] reductase [NADH] (399 aa).

NAD(+) contacts are provided by residues 48-53 (GASTGY), 74-75 (FE), 111-112 (DA), and 139-140 (LA). Tyr-225 is a binding site for substrate. The Proton donor role is filled by Tyr-235. NAD(+) is bound by residues Lys-244 and 274 to 276 (VVT).

This sequence belongs to the TER reductase family. As to quaternary structure, monomer.

It catalyses the reaction a 2,3-saturated acyl-[ACP] + NAD(+) = a (2E)-enoyl-[ACP] + NADH + H(+). It functions in the pathway lipid metabolism; fatty acid biosynthesis. Functionally, involved in the final reduction of the elongation cycle of fatty acid synthesis (FAS II). Catalyzes the reduction of a carbon-carbon double bond in an enoyl moiety that is covalently linked to an acyl carrier protein (ACP). This chain is Enoyl-[acyl-carrier-protein] reductase [NADH], found in Yersinia enterocolitica serotype O:8 / biotype 1B (strain NCTC 13174 / 8081).